The sequence spans 499 residues: Putative alpha-galactosidase 8 (499 aa).

N-linked (GlcNAc...) asparagine glycans are attached at residues asparagine 154 and asparagine 191. Aspartate 238 functions as the Nucleophile in the catalytic mechanism. N-linked (GlcNAc...) asparagine glycosylation is present at asparagine 256. The active-site Proton donor is aspartate 303.

It belongs to the glycosyl hydrolase 27 family.

It localises to the secreted. It catalyses the reaction Hydrolysis of terminal, non-reducing alpha-D-galactose residues in alpha-D-galactosides, including galactose oligosaccharides, galactomannans and galactolipids.. Functionally, putative alpha-galactosidase involved in the degradation of simple oligosaccharides like melibiose, raffinose and stachyose, and of polymeric galacto(gluco)mannans. The polypeptide is Putative alpha-galactosidase 8 (agl8) (Emericella nidulans (strain FGSC A4 / ATCC 38163 / CBS 112.46 / NRRL 194 / M139) (Aspergillus nidulans)).